A 531-amino-acid chain; its full sequence is Sterol 26-hydroxylase, mitochondrial (531 aa).

Residues 1-33 (MAALGCARLRWALRGAGRGLCPHGARAKAAIPA) constitute a mitochondrion transit peptide. An N6-acetyllysine modification is found at Lys-283. The interval 384–398 (PLLKAVLKETLRLYP) is sterol-binding. A heme-binding site is contributed by Cys-476. 2 positions are modified to N6-acetyllysine: Lys-509 and Lys-520.

It belongs to the cytochrome P450 family. As to quaternary structure, interacts with HSP70; this interaction is required for initial targeting to mitochondria. Requires heme as cofactor. Expressed in the neural retina and underlying retinal pigment epithelium (at protein level). Expressed in the gray and white matter of cerebellum (at protein level).

The protein localises to the mitochondrion inner membrane. The enzyme catalyses 5beta-cholestane-3alpha,7alpha,12alpha-triol + 6 reduced [adrenodoxin] + 3 O2 + 5 H(+) = (25R)-3alpha,7alpha,12alpha-trihydroxy-5beta-cholestan-26-oate + 6 oxidized [adrenodoxin] + 4 H2O. It carries out the reaction cholestanol + 2 reduced [adrenodoxin] + O2 + 2 H(+) = (25R)-26-hydroxycholestanol + 2 oxidized [adrenodoxin] + H2O. It catalyses the reaction (25R)-3beta-hydroxycholest-5-en-7-one-26-al + 2 reduced [adrenodoxin] + O2 + H(+) = (25R)-3beta-hydroxycholest-5-en-7-one-26-oate + 2 oxidized [adrenodoxin] + H2O. The catalysed reaction is (25R)-3beta,26-dihydroxycholest-5-en-7-one + 2 reduced [adrenodoxin] + O2 + 2 H(+) = (25R)-3beta-hydroxycholest-5-en-7-one-26-al + 2 oxidized [adrenodoxin] + 2 H2O. The enzyme catalyses 7-oxocholesterol + 2 reduced [adrenodoxin] + O2 + 2 H(+) = (25R)-3beta,26-dihydroxycholest-5-en-7-one + 2 oxidized [adrenodoxin] + H2O. It carries out the reaction calciol + 2 reduced [adrenodoxin] + O2 + 2 H(+) = calcidiol + 2 oxidized [adrenodoxin] + H2O. It catalyses the reaction (25R)-5beta-cholestane-3alpha,7alpha,12alpha,26-tetrol + 2 reduced [adrenodoxin] + O2 + 2 H(+) = (25R)-3alpha,7alpha,12alpha-trihydroxy-5beta-cholestan-26-al + 2 oxidized [adrenodoxin] + 2 H2O. The catalysed reaction is 2 reduced [adrenodoxin] + cholesterol + O2 + 2 H(+) = (25R)-cholest-5-ene-3beta,26-diol + 2 oxidized [adrenodoxin] + H2O. The enzyme catalyses (25R)-3beta,4beta-dihydroxycholest-5-en-26-al + 2 reduced [adrenodoxin] + O2 + H(+) = (25R)-3beta,4beta-dihydroxycholest-5-en-26-oate + 2 oxidized [adrenodoxin] + H2O. It carries out the reaction (25R)-4beta,26-dihydroxycholesterol + 2 reduced [adrenodoxin] + O2 + 2 H(+) = (25R)-3beta,4beta-dihydroxycholest-5-en-26-al + 2 oxidized [adrenodoxin] + 2 H2O. It catalyses the reaction 4beta-hydroxycholesterol + 2 reduced [adrenodoxin] + O2 + 2 H(+) = (25R)-4beta,26-dihydroxycholesterol + 2 oxidized [adrenodoxin] + H2O. The catalysed reaction is (25R)-3beta-hydroxy-5-cholesten-26-al + 2 reduced [adrenodoxin] + O2 + H(+) = (25R)-3beta-hydroxy-5-cholestenoate + 2 oxidized [adrenodoxin] + H2O. The enzyme catalyses (25R)-cholest-5-ene-3beta,26-diol + 2 reduced [adrenodoxin] + O2 + 2 H(+) = (25R)-3beta-hydroxy-5-cholesten-26-al + 2 oxidized [adrenodoxin] + 2 H2O. It carries out the reaction (25R)-3alpha,7alpha,12alpha-trihydroxy-5beta-cholestan-26-al + 2 reduced [adrenodoxin] + O2 + H(+) = (25R)-3alpha,7alpha,12alpha-trihydroxy-5beta-cholestan-26-oate + 2 oxidized [adrenodoxin] + H2O. It catalyses the reaction 5beta-cholestane-3alpha,7alpha,12alpha-triol + 2 reduced [adrenodoxin] + O2 + 2 H(+) = (25R)-5beta-cholestane-3alpha,7alpha,12alpha,26-tetrol + 2 oxidized [adrenodoxin] + H2O. It functions in the pathway hormone biosynthesis; cholecalciferol biosynthesis. It participates in steroid metabolism; cholesterol degradation. Its pathway is lipid metabolism; bile acid biosynthesis. Its function is as follows. Cytochrome P450 monooxygenase that catalyzes regio- and stereospecific hydroxylation of cholesterol and its derivatives. Hydroxylates (with R stereochemistry) the terminal methyl group of cholesterol side-chain in a three step reaction to yield at first a C26 alcohol, then a C26 aldehyde and finally a C26 acid. Regulates cholesterol homeostasis by catalyzing the conversion of excess cholesterol to bile acids via both the 'neutral' (classic) and the 'acid' (alternative) pathways. May also regulate cholesterol homeostasis via generation of active oxysterols, which act as ligands for NR1H2 and NR1H3 nuclear receptors, modulating the transcription of genes involved in lipid metabolism. Plays a role in cholestanol metabolism in the cerebellum. Similarly to cholesterol, hydroxylates cholestanol and may facilitate sterol diffusion through the blood-brain barrier to the systemic circulation for further degradation. Also hydroxylates retinal 7-ketocholesterol, a noxious oxysterol with pro-inflammatory and pro-apoptotic effects, and may play a role in its elimination from the retinal pigment epithelium. May play a redundant role in vitamin D biosynthesis. Catalyzes 25-hydroxylation of vitamin D3 that is required for its conversion to a functionally active form. This is Sterol 26-hydroxylase, mitochondrial from Homo sapiens (Human).